The following is a 762-amino-acid chain: MSSSSVVDHSPHDSAPSPLVPTASNLILIDNYDSFTWNVYQYLVLEGAKVTVFRNDQITIDELIAKNPTQLVISPGPGHPGTDSGISRDAIRHFAGKIPIFGVCMGQQCIFDVYGGDVCFAGEILHGKTSPLRHDGKGAYAGLSQDLPVTRYHSLAGTHVTLPECLEVTSWIAKEDGSKGVIMGVRHKEYTIEGVQFHPESILSAEGRGMFRNFLHMQGGTWAENERLQKAAQAQAANTKSDAPTPKKSNILQKIYAHRKAAVDAQKQIPSLRPSDLQAAYNLSIAPPQISLVDRLRNSPFDVALCAEIKRASPSKGVFALDIDAPSQARKYALAGASVISVLTEPEWFKGSIDDLRAVRQVLNGMPNRPAVLRKEFIFDEYQILEARLAGADTVLLIVKMLEYELLERLYKYSLSLGMEPLVEVQNTEEMATAIKLGAKVIGVNNRNLESFEVDLGTTGRLRSMVPSDTFLCALSGINTHQDVLDCKRDGVNGILVGEAIMRAPDATQFIRELCAGLTGPVPKSAAEPLLVKICGTRSAEAAAEAIKAGADLVGMIMVPGTKRCVDHETALSISQAVHMSKKTGSTEVSSQASKSARDFFNINAEIIRKRGPLLVGVFMNQPLEEVLEKQHLYDLDIVQLHGDEPLEWANLIPVPVVRKFKPGQVGLATRGYHAVPLLDSGAGSGTLLDLESVKKELEKDEQVTVLLAGGLEPSNVVETVKSLGPLSERVIGVDVSSGVEEGGKQSLEKIREFVKAAKSVR.

The Glutamine amidotransferase type-1 domain maps to N25–E224. Position 76–78 (G76–G78) interacts with L-glutamine. C104 serves as the catalytic Nucleophile; for GATase activity. Residues Q108 and S154–L155 each bind L-glutamine. Catalysis depends on for GATase activity residues H198 and E200. An indole-3-glycerol phosphate synthase region spans residues I251–C515. Residues L531–R762 are N-(5'-phosphoribosyl)anthranilate isomerase.

In terms of assembly, tetramer of two components I and two components II.

It catalyses the reaction chorismate + L-glutamine = anthranilate + pyruvate + L-glutamate + H(+). The enzyme catalyses N-(5-phospho-beta-D-ribosyl)anthranilate = 1-(2-carboxyphenylamino)-1-deoxy-D-ribulose 5-phosphate. It carries out the reaction 1-(2-carboxyphenylamino)-1-deoxy-D-ribulose 5-phosphate + H(+) = (1S,2R)-1-C-(indol-3-yl)glycerol 3-phosphate + CO2 + H2O. It participates in amino-acid biosynthesis; L-tryptophan biosynthesis; L-tryptophan from chorismate: step 1/5. The protein operates within amino-acid biosynthesis; L-tryptophan biosynthesis; L-tryptophan from chorismate: step 3/5. Its pathway is amino-acid biosynthesis; L-tryptophan biosynthesis; L-tryptophan from chorismate: step 4/5. Trifunctional enzyme bearing the Gln amidotransferase (GATase) domain of anthranilate synthase, indole-glycerolphosphate synthase, and phosphoribosylanthranilate isomerase activities. The chain is Multifunctional tryptophan biosynthesis protein (trp-1) from Neurospora crassa (strain ATCC 24698 / 74-OR23-1A / CBS 708.71 / DSM 1257 / FGSC 987).